A 362-amino-acid polypeptide reads, in one-letter code: Adenosine deaminase (362 aa).

Residues His19 and His21 each contribute to the Zn(2+) site. Substrate is bound by residues His21, Asp23, and Gly181. His208 is a Zn(2+) binding site. The active-site Proton donor is Glu211. Asp300 is a binding site for Zn(2+).

The protein belongs to the metallo-dependent hydrolases superfamily. Adenosine and AMP deaminases family. Adenosine deaminase subfamily. Zn(2+) is required as a cofactor.

It carries out the reaction adenosine + H2O + H(+) = inosine + NH4(+). The catalysed reaction is 2'-deoxyadenosine + H2O + H(+) = 2'-deoxyinosine + NH4(+). Its function is as follows. Catalyzes the hydrolytic deamination of adenosine and 2-deoxyadenosine. The sequence is that of Adenosine deaminase from Mycobacteroides abscessus (strain ATCC 19977 / DSM 44196 / CCUG 20993 / CIP 104536 / JCM 13569 / NCTC 13031 / TMC 1543 / L948) (Mycobacterium abscessus).